Reading from the N-terminus, the 180-residue chain is Regulator of G-protein signaling 8 (180 aa).

At Ser26 the chain carries Phosphoserine. Residues 56–171 enclose the RGS domain; it reads SFDVLLSHKY…FLRSKMYLDL (116 aa).

As to quaternary structure, interacts with GNAO1. Interacts with GNAI3.

The protein localises to the cell membrane. It is found in the membrane. The protein resides in the perikaryon. It localises to the cell projection. Its subcellular location is the dendrite. The protein localises to the nucleus. Regulates G protein-coupled receptor signaling cascades, including signaling via muscarinic acetylcholine receptor CHRM2 and dopamine receptor DRD2. Inhibits signal transduction by increasing the GTPase activity of G protein alpha subunits, thereby driving them into their inactive GDP-bound form. Modulates the activity of potassium channels that are activated in response to DRD2 and CHRM2 signaling. This Homo sapiens (Human) protein is Regulator of G-protein signaling 8 (RGS8).